The sequence spans 387 residues: MNIDSLKNEWEELNKEFAELESCNRRYIELLEQLHSHQQICFNEIKHQRYRMNQITTSLRQFKGPVPAEDKEKVDDLHKMTLKRKAQLHEIEQSLPAKSGRYLQIILGDVNVSILNRNDKVRYKDDYEKFKLILNVIGLIMAFFNLIFNYRALELAFIFLLVWYYCTLTIRESILKVNGSRIKGWWRAHHFISTVAAGVLLVWPQGEHWQIFRMQFMYFNVYISIVQYLQFGYQKGLLYRLKALGERHNMDITIEGFHSWMWRGLSFLLPFLFIGYGYQAYNAWTLYKLAYSPPDAPWHVSVMSGLFLLLFVGNMATTLWVVPEKIRERAKERYRLQSMGKSMKLRKEMKNSASDLDLSSGSKLSPTATTTTSIATATQTPAEKKET.

A coiled-coil region spans residues 1–39 (MNIDSLKNEWEELNKEFAELESCNRRYIELLEQLHSHQQ). Asn-111 carries N-linked (GlcNAc...) asparagine glycosylation. A run of 6 helical transmembrane segments spans residues 130-150 (FKLI…IFNY), 155-175 (LAFI…ESIL), 191-211 (FIST…HWQI), 216-238 (FMYF…KGLL), 264-284 (GLSF…YNAW), and 302-322 (VMSG…LWVV). Residues 346-387 (RKEMKNSASDLDLSSGSKLSPTATTTTSIATATQTPAEKKET) form a disordered region. 3 positions are modified to phosphoserine: Ser-352, Ser-354, and Ser-365. The segment covering 352-381 (SASDLDLSSGSKLSPTATTTTSIATATQTP) has biased composition (low complexity).

Belongs to the TMEM120 family.

It localises to the membrane. The polypeptide is Transmembrane protein 120 homolog (Drosophila melanogaster (Fruit fly)).